Consider the following 368-residue polypeptide: Protein pxr1 (368 aa).

Disordered stretches follow at residues 1 to 28 (MGLA…TDSF) and 161 to 339 (KEKA…PMGI). The span at 15-27 (DPNNTRWSGNTDS) shows a compositional bias: polar residues. The 55-residue stretch at 25–79 (TDSFGHRMMKSQGWTPGEYLGAKDAAHAEFHTEANASHIRVVIKDNTLGLGAKIG) folds into the G-patch domain. Residues 168 to 182 (SSEESDSSSDEEEEK) are compositionally biased toward acidic residues. Basic residues-rich tracts occupy residues 209 to 226 (SKKS…KSKK), 242 to 254 (KSKK…KSKS), 271 to 283 (KARK…KKRK), and 301 to 312 (SSKKSKKDKHKS). The span at 313 to 324 (PSTSKTSTKEST) shows a compositional bias: low complexity. Over residues 325-334 (PIVSESSGRS) the composition is skewed to polar residues.

The protein belongs to the PINX1 family.

Its subcellular location is the nucleus. The protein resides in the nucleolus. Functionally, involved in rRNA-processing at A0, A1 and A2 sites and negatively regulates telomerase. The sequence is that of Protein pxr1 (pxr1) from Botryotinia fuckeliana (strain B05.10) (Noble rot fungus).